We begin with the raw amino-acid sequence, 189 residues long: dCTP deaminase (189 aa).

DCTP is bound by residues 112 to 117 (KSTYAR), 136 to 138 (TLE), glutamine 157, tyrosine 171, and glutamine 181. Glutamate 138 acts as the Proton donor/acceptor in catalysis.

The protein belongs to the dCTP deaminase family. As to quaternary structure, homotrimer.

It carries out the reaction dCTP + H2O + H(+) = dUTP + NH4(+). Its pathway is pyrimidine metabolism; dUMP biosynthesis; dUMP from dCTP (dUTP route): step 1/2. Its function is as follows. Catalyzes the deamination of dCTP to dUTP. This Halorhodospira halophila (strain DSM 244 / SL1) (Ectothiorhodospira halophila (strain DSM 244 / SL1)) protein is dCTP deaminase.